The chain runs to 326 residues: Ribosomal large subunit pseudouridine synthase D (326 aa).

The 74-residue stretch at Q18–D91 folds into the S4 RNA-binding domain. D139 is a catalytic residue. Residues G183–P203 are disordered.

This sequence belongs to the pseudouridine synthase RluA family.

It is found in the cytoplasm. It carries out the reaction uridine(1911/1915/1917) in 23S rRNA = pseudouridine(1911/1915/1917) in 23S rRNA. Its function is as follows. Responsible for synthesis of pseudouridine from uracil at positions 1911, 1915 and 1917 in 23S ribosomal RNA. The polypeptide is Ribosomal large subunit pseudouridine synthase D (rluD) (Salmonella typhi).